Reading from the N-terminus, the 337-residue chain is MLTLPFDESVVMPESQMCRKFSRECEDQKQIKKPESFSKQIVLRGKSIKRAPGEETEKEEEEEDREEEDENGLPRRRGLRKKKTTKLRLERVKFRRQEANARERNRMHGLNDALDNLRKVVPCYSKTQKLSKIETLRLAKNYIWALSEILRIGKRPDLLTFVQNLCKGLSQPTTNLVAGCLQLNARSFLVGQGGEAAHHTRSPYSTFYPPYHSPELTTPPGHGTLDNSKSMKPYNYCSAYESFYESTSPECASPQFEGPLSPPPINYNGIFSLKQEETLDYGKNYNYGMHYCAVPPRGPLGQGAMFRLPTDSHFPYDLHLRSQSLTMQDELNAVFHN.

Residues 43-82 form a disordered region; that stretch reads LRGKSIKRAPGEETEKEEEEEDREEEDENGLPRRRGLRKK. The segment covering 54–71 has biased composition (acidic residues); the sequence is EETEKEEEEEDREEEDEN. Residues 80-86 carry the Nuclear localization signal motif; that stretch reads RKKKTTK. The bHLH domain maps to 94 to 146; it reads FRRQEANARERNRMHGLNDALDNLRKVVPCYSKTQKLSKIETLRLAKNYIWAL.

In terms of assembly, efficient DNA binding requires dimerization with another bHLH protein.

It localises to the nucleus. Functionally, activates E box-dependent transcription in collaboration with TCF3/E47. May be a trans-acting factor involved in the development and maintenance of the mammalian nervous system. Transactivates the promoter of its own gene. This chain is Neurogenic differentiation factor 6 (NEUROD6), found in Bos taurus (Bovine).